A 1843-amino-acid chain; its full sequence is Proteasome activator complex subunit 4 (1843 aa).

Residues 1–11 (MEPAERAGVGE) show a composition bias toward low complexity. The segment at 1–25 (MEPAERAGVGEPPEPGGRPEPGPRG) is disordered. The segment covering 12-22 (PPEPGGRPEPG) has biased composition (pro residues). HEAT repeat units follow at residues 475–519 (PEGP…LVDC) and 998–1037 (NFCCRDIIPLVLEFLRPDRQGVTQQQFKGALYCLLGNHSG). Ser1121 carries the post-translational modification Phosphoserine. HEAT repeat units follow at residues 1179 to 1217 (RVLPLRAIRFFVENLNHDAIVVRKMAISAVAGILKQLKR) and 1354 to 1392 (DAFLPVLKPHLEHLVADSHESTQRCVAEIIAGLIRGSKH). Position 1614 is a phosphoserine (Ser1614). HEAT repeat units lie at residues 1636 to 1674 (PHQVPLVLQVLKQTARSSSWHARYTVLTYLQTMVFYNLF) and 1680 to 1718 (EDAVKDIRWLVISLLEDEQLEVREMAATTLSGLLQCNFL). The interval 1650–1738 (ARSSSWHARY…EQLCKTKLPK (89 aa)) is bromodomain-like (BRDL). Ser1746 is modified (phosphoserine).

Belongs to the BLM10 family. As to quaternary structure, homodimer. Interacts with the 20S and 26S proteasomes. Component of the spermatoproteasome, a form of the proteasome specifically found in testis.

Its subcellular location is the cytoplasm. The protein localises to the cytosol. It localises to the nucleus. The protein resides in the nucleus speckle. Its function is as follows. Associated component of the proteasome that specifically recognizes acetylated histones and promotes ATP- and ubiquitin-independent degradation of core histones during spermatogenesis and DNA damage response. Recognizes and binds acetylated histones via its bromodomain-like (BRDL) region and activates the proteasome by opening the gated channel for substrate entry. Binds to the core proteasome via its C-terminus, which occupies the same binding sites as the proteasomal ATPases, opening the closed structure of the proteasome via an active gating mechanism. Component of the spermatoproteasome, a form of the proteasome specifically found in testis: binds to acetylated histones and promotes degradation of histones, thereby participating actively to the exchange of histones during spermatogenesis. Also involved in DNA damage response in somatic cells, by promoting degradation of histones following DNA double-strand breaks. The protein is Proteasome activator complex subunit 4 of Homo sapiens (Human).